A 431-amino-acid polypeptide reads, in one-letter code: Protein prenyltransferase alpha subunit repeat-containing protein 1-B (431 aa).

PFTA repeat units lie at residues 85–118 (ELIDVTCTLLLLNPDFTTAWNVRKELIQSGTLNP), 120–153 (KDLQLGKLALTKFPKSPETWIHRRWVLQRVVQEL), 178–211 (EEMHVCYEAAGRYPSNYNSWSHRIWVIQHLGNLN), 217–250 (DELSSTKHWVSMHVSDHSGFHYRQFLLKSLLCKT), and 293–326 (EEMKLNRELLDSYPGHETLWCHRRQIFKLIHQLL). Residues 363–383 (PMDVDGMSDPNKQGYTQETKR) form a disordered region. The stretch at 394–431 (SLDSELRFINCVLTNCCSPEQSRFAASYRKWLLSLQGY) is one PFTA 6 repeat.

The protein belongs to the protein prenyltransferase subunit alpha family.

The polypeptide is Protein prenyltransferase alpha subunit repeat-containing protein 1-B (ptar1-b) (Xenopus laevis (African clawed frog)).